A 161-amino-acid polypeptide reads, in one-letter code: Zinc finger A20 and AN1 domain-containing stress-associated protein 9 (161 aa).

The segment at 17 to 51 (PEAPILCVNNCGFFGSSMTNNMCSKCYRDFVKVTT) adopts an A20-type zinc-finger fold. 4 residues coordinate Zn(2+): Cys23, Cys27, Cys39, and Cys42. The tract at residues 62–99 (FTPASSSKTPLEPAKPDEVPAAAVEDKQAAQEPPKPPS) is disordered. The segment covering 75-90 (AKPDEVPAAAVEDKQA) has biased composition (basic and acidic residues). The segment at 96–142 (KPPSNRCLSCRKKVGLTGFQCRCGGTFCSTHRYTEAHDCTFDYKKAG) adopts an AN1-type zinc-finger fold. 8 residues coordinate Zn(2+): Cys102, Cys105, Cys116, Cys118, Cys123, His126, His132, and Cys134.

In terms of biological role, may be involved in environmental stress response. This Oryza sativa subsp. japonica (Rice) protein is Zinc finger A20 and AN1 domain-containing stress-associated protein 9 (SAP9).